We begin with the raw amino-acid sequence, 96 residues long: Myticin-A (96 aa).

A signal peptide spans 1-20 (MKATILLAVLVAVFVAGTEA). A propeptide spans 61 to 96 (VNNPFRVNQVAKSINDLDYTPIMKSMENLDNGMDML) (removed in mature form).

Contains four disulfide bonds. As to expression, hemocytes.

The protein resides in the secreted. In terms of biological role, bacteriolytic activity against Gram-positive bacteria M.luteus, B.megaterium and A.viridans. The chain is Myticin-A from Mytilus galloprovincialis (Mediterranean mussel).